The following is a 596-amino-acid chain: Elongation factor 4 (596 aa).

In terms of domain architecture, tr-type G spans 2–184 (KHIRNFSIIA…MIVKDVPPPV (183 aa)). GTP-binding positions include 14-19 (DHGKST) and 131-134 (NKID).

It belongs to the TRAFAC class translation factor GTPase superfamily. Classic translation factor GTPase family. LepA subfamily.

It localises to the cell inner membrane. The enzyme catalyses GTP + H2O = GDP + phosphate + H(+). Required for accurate and efficient protein synthesis under certain stress conditions. May act as a fidelity factor of the translation reaction, by catalyzing a one-codon backward translocation of tRNAs on improperly translocated ribosomes. Back-translocation proceeds from a post-translocation (POST) complex to a pre-translocation (PRE) complex, thus giving elongation factor G a second chance to translocate the tRNAs correctly. Binds to ribosomes in a GTP-dependent manner. The protein is Elongation factor 4 of Pseudoalteromonas translucida (strain TAC 125).